Reading from the N-terminus, the 185-residue chain is dCTP deaminase (185 aa).

107 to 112 contacts dCTP; that stretch reads KSTYAR. Glu133 acts as the Proton donor/acceptor in catalysis. DCTP is bound by residues Gln152, Tyr166, and Gln176.

It belongs to the dCTP deaminase family. In terms of assembly, homotrimer.

It catalyses the reaction dCTP + H2O + H(+) = dUTP + NH4(+). It functions in the pathway pyrimidine metabolism; dUMP biosynthesis; dUMP from dCTP (dUTP route): step 1/2. In terms of biological role, catalyzes the deamination of dCTP to dUTP. The sequence is that of dCTP deaminase from Nitratiruptor sp. (strain SB155-2).